We begin with the raw amino-acid sequence, 474 residues long: Neuronal acetylcholine receptor subunit eat-2 (474 aa).

Residues 1–21 (MTLKIAFFTLILLVSIERVYS) form the signal peptide. Topologically, residues 22 to 237 (SDEEYRLLKD…MHLKRRTMYY (216 aa)) are extracellular. A glycan (N-linked (GlcNAc...) asparagine) is linked at N95. C149 and C163 are joined by a disulfide. 3 helical membrane passes run 238–258 (GLNWIVPSILISLSNILGFTM), 266–286 (ITLQITNFLSVMVFLAMVSEV), and 303–323 (LSIVILGLSICASLIIVNIFF). Topologically, residues 324–440 (RHPKTHRMGD…WRFMAMVIDR (117 aa)) are cytoplasmic. A disordered region spans residues 359–378 (PRREEEKNDEEAGGDGTKLL). A helical membrane pass occupies residues 441–461 (LSLFLFTGLIFGTTALIFAFC).

It belongs to the ligand-gated ion channel (TC 1.A.9) family. Acetylcholine receptor (TC 1.A.9.1) subfamily. As to quaternary structure, neuronal AChR seems to be composed of two different type of subunits: alpha and beta. As to expression, expressed in pharyngeal muscle.

Its subcellular location is the postsynaptic cell membrane. It localises to the cell membrane. In terms of biological role, after binding acetylcholine, the AChR responds by an extensive change in conformation that affects all subunits and leads to opening of an ion-conducting channel across the plasma membrane. Nicotinic acetylcholine receptor in the MC pharyngeal motor neuron involved in pharyngeal pumping. Has a role in the determination of life span possibly via calorific restriction which affects growth rate, although this is independent of metabolic activity. Plays a role in the defense against the accumulation of ingested live pathogenic bacteria in the intestine. The protein is Neuronal acetylcholine receptor subunit eat-2 of Caenorhabditis elegans.